Here is a 394-residue protein sequence, read N- to C-terminus: D-mannose isomerase (394 aa).

Residues His-251 and His-380 each act as proton donor/acceptor in the active site.

The protein belongs to the N-acylglucosamine 2-epimerase family. Monomer.

The enzyme catalyses D-mannose = D-fructose. It carries out the reaction D-lyxose = D-xylulose. In terms of biological role, catalyzes the reversible isomerization of D-mannose to D-fructose. Can also isomerize D-lyxose, with lower efficiency. In longer reaction with a higher concentration of enzyme, it can isomerize 4-OH D-mannose derivatives (D-talose and 4-O-monosaccharyl-D-mannose). Cannot use D-glucose. The chain is D-mannose isomerase from Marinomonas mediterranea (strain ATCC 700492 / JCM 21426 / NBRC 103028 / MMB-1).